The chain runs to 151 residues: Methylglyoxal synthase (151 aa).

Positions 1–151 constitute an MGS-like domain; that stretch reads MKKTTRTMAA…DYQAYLAERT (151 aa). Substrate contacts are provided by residues H19, K23, 45-48, and 65-66; these read TGTT and SG. D71 serves as the catalytic Proton donor/acceptor. A substrate-binding site is contributed by H98.

This sequence belongs to the methylglyoxal synthase family.

It catalyses the reaction dihydroxyacetone phosphate = methylglyoxal + phosphate. Functionally, catalyzes the formation of methylglyoxal from dihydroxyacetone phosphate. The protein is Methylglyoxal synthase of Vibrio cholerae serotype O1 (strain ATCC 39541 / Classical Ogawa 395 / O395).